The chain runs to 399 residues: MGLSWTVPLEWGKNLSASNPLGFLPDHQLDPAFRANTNNPDWDFNPKKDPWPEANKVGVGAYGPGFTPPHGGLLGWSPQSQGTLTTLPADPPPASTNRQSGRQPTPISPPLRDSHPQAMQWNSTAFHQALQNPKVRGLYFPAGGSSSGIVNPVPTIASHISSIFSRIGDPAPNMENITSGFLGPLLVLQAGFFLLTRILTIPQSLDSWWTSLNFLGGVPVCPGLNSQSPTSNHSPISCPPTCPGYRWMCLRRFIIFLFILLLCLIFLLVLLDYQGMLPVCPLIPGSSTTSTGPCKTCTTPAQGNSMYPSCCCTKPSDGNCTCIPIPSSWAFAKYLWEWASVRFSWLSLLVPFVQWFVGLSPTVWLSAIWMMWYWGPNLYNILSPFIPLLPIFFCLWVYI.

Position 1 is an N-acetylmethionine (methionine 1). The N-myristoyl glycine; by host moiety is linked to residue glycine 2. The tract at residues glycine 2–alanine 118 is pre-S1. A pre-S region spans residues glycine 2 to asparagine 173. Residues glycine 2–glycine 180 lie on the Virion surface; in external conformation side of the membrane. Topologically, residues glycine 2 to arginine 252 are intravirion; in internal conformation. Residue serine 4 is glycosylated (N-linked (GlcNAc...) asparagine). The disordered stretch occupies residues proline 69 to glutamine 117. Positions methionine 119–asparagine 173 are pre-S2. The helical transmembrane segment at phenylalanine 181 to isoleucine 201 threads the bilayer. Over proline 202–arginine 252 the chain is Intravirion; in external conformation. A helical transmembrane segment spans residues phenylalanine 253 to tyrosine 273. Residues glutamine 274 to serine 347 lie on the Virion surface side of the membrane. Residue asparagine 319 is glycosylated (N-linked (GlcNAc...) asparagine; by host). The chain crosses the membrane as a helical span at residues leucine 348–isoleucine 368. Residues tryptophan 369–tryptophan 374 are Intravirion-facing. Residues glycine 375–valine 397 traverse the membrane as a helical segment. Residues tyrosine 398–isoleucine 399 are Virion surface-facing.

It belongs to the orthohepadnavirus major surface antigen family. As to quaternary structure, in its internal form (Li-HBsAg), interacts with the capsid protein and with the isoform S. Interacts with host chaperone CANX. In terms of assembly, associates with host chaperone CANX through its pre-S2 N glycan; this association may be essential for isoform M proper secretion. Interacts with isoform L. Interacts with the antigens of satellite virus HDV (HDVAgs); this interaction is required for encapsidation of HDV genomic RNA. In terms of processing, isoform M is N-terminally acetylated by host at a ratio of 90%, and N-glycosylated by host at the pre-S2 region. Post-translationally, myristoylated.

The protein resides in the virion membrane. The large envelope protein exists in two topological conformations, one which is termed 'external' or Le-HBsAg and the other 'internal' or Li-HBsAg. In its external conformation the protein attaches the virus to cell receptors and thereby initiating infection. This interaction determines the species specificity and liver tropism. This attachment induces virion internalization predominantly through caveolin-mediated endocytosis. The large envelope protein also assures fusion between virion membrane and endosomal membrane. In its internal conformation the protein plays a role in virion morphogenesis and mediates the contact with the nucleocapsid like a matrix protein. Functionally, the middle envelope protein plays an important role in the budding of the virion. It is involved in the induction of budding in a nucleocapsid independent way. In this process the majority of envelope proteins bud to form subviral lipoprotein particles of 22 nm of diameter that do not contain a nucleocapsid. The chain is Large envelope protein from Hepatitis B virus genotype G (isolate IG29227/2000) (HBV-G).